We begin with the raw amino-acid sequence, 414 residues long: Serine/arginine (SR)-type shuttling mRNA binding protein NPL3 (414 aa).

Positions 1-11 (MSEAQETHVEQ) are enriched in basic and acidic residues. The tract at residues 1–119 (MSEAQETHVE…GRPPMHHRQE (119 aa)) is disordered. Phosphoserine is present on S15. Low complexity predominate over residues 33-51 (DAPQEPQVPQESAPQESAP). Residues 52 to 68 (QEPPAPQEQNDVPPPSN) are compositionally biased toward pro residues. Residues 75 to 92 (EESHSVQDYQEAHQHHQP) are compositionally biased toward basic and acidic residues. The residue at position 79 (S79) is a Phosphoserine. A compositionally biased stretch (pro residues) spans 93–105 (PEPQPYYPPPPPG). RRM domains follow at residues 125–195 (TRLF…YSKL) and 200–275 (YRIT…RDDN). Phosphoserine occurs at positions 182, 212, and 224. The tract at residues 269–299 (TVERDDNPPPIRRSNRGGFRGRGGFRGGFRG) is disordered. The span at 286 to 299 (GFRGRGGFRGGFRG) shows a compositional bias: gly residues. Dimethylated arginine occurs at positions 288, 290, 294, and 298. The residue at position 302 (R302) is an Omega-N-methylarginine. A dimethylated arginine; alternate mark is found at R307 and R314. Residues R307 and R314 each carry the omega-N-methylarginine; alternate modification. 4 positions are modified to omega-N-methylarginine: R321, R329, R337, and R344. Residues 343–414 (SRGGYDSPRG…DAPRERSPTR (72 aa)) form a disordered region. A compositionally biased stretch (low complexity) spans 346–360 (GYDSPRGGYDSPRGG). Dimethylated arginine; alternate is present on R351. The residue at position 351 (R351) is an Omega-N-methylarginine; alternate. S356 is modified (phosphoserine). 4 positions are modified to dimethylated arginine; alternate: R358, R363, R377, and R384. 4 positions are modified to omega-N-methylarginine; alternate: R358, R363, R377, and R384. The span at 379–389 (SYGGSRGGYDG) shows a compositional bias: gly residues. At R391 the chain carries Omega-N-methylarginine. A compositionally biased stretch (basic and acidic residues) spans 399–414 (DAYRTRDAPRERSPTR).

Belongs to the RRM GAR family. As to quaternary structure, interacts with RRP6. Post-translationally, methylated by HMT1. The methylation is required for nuclear export.

Its subcellular location is the cytoplasm. The protein resides in the nucleus. It localises to the stress granule. Involved in mRNA processing and export. Required for efficient splicing of a large set of pre-mRNAs by efficient co-transcriptional recruitment of the splicing machinery. Remains associated with the mRNP during early steps of translation elongation. This Saccharomyces cerevisiae (strain ATCC 204508 / S288c) (Baker's yeast) protein is Serine/arginine (SR)-type shuttling mRNA binding protein NPL3.